The sequence spans 160 residues: Keratin-associated protein 13-4 (160 aa).

Tandem repeats lie at residues 41–50 (CQLGSSLYRD), 51–60 (CQKTCWEPAS), 61–70 (CQKSCYHPRT), and 77–86 (CQTTCSGSLG). Residues 41-86 (CQLGSSLYRDCQKTCWEPASCQKSCYHPRTSMLCCPCQTTCSGSLG) are 4 X 10 AA approximate repeats.

This sequence belongs to the PMG family. As to quaternary structure, interacts with hair keratins.

In the hair cortex, hair keratin intermediate filaments are embedded in an interfilamentous matrix, consisting of hair keratin-associated proteins (KRTAP), which are essential for the formation of a rigid and resistant hair shaft through their extensive disulfide bond cross-linking with abundant cysteine residues of hair keratins. The matrix proteins include the high-sulfur and high-glycine-tyrosine keratins. The protein is Keratin-associated protein 13-4 (KRTAP13-4) of Hylobates agilis (Agile gibbon).